The sequence spans 122 residues: Small ribosomal subunit protein uS13c (122 aa).

The protein belongs to the universal ribosomal protein uS13 family. As to quaternary structure, part of the 30S ribosomal subunit.

The protein localises to the plastid. Its subcellular location is the chloroplast. Its function is as follows. Located at the top of the head of the 30S subunit, it contacts several helices of the 16S rRNA. The protein is Small ribosomal subunit protein uS13c of Cyanidium caldarium (Red alga).